A 484-amino-acid polypeptide reads, in one-letter code: Probable protein disulfide-isomerase ER-60 (484 aa).

The signal sequence occupies residues 1 to 14; it reads MRWLLSCLFLVAFA. 2 Thioredoxin domains span residues 15-125 and 338-467; these read SCSK…SRAG and FEDG…REAT. Residues Cys46, Cys49, Cys388, and Cys391 each act as nucleophile in the active site. 2 disulfides stabilise this stretch: Cys46/Cys49 and Cys388/Cys391. Residues 481–484 carry the Prevents secretion from ER motif; sequence KSEL.

The protein belongs to the protein disulfide isomerase family.

It localises to the endoplasmic reticulum lumen. It catalyses the reaction Catalyzes the rearrangement of -S-S- bonds in proteins.. The chain is Probable protein disulfide-isomerase ER-60 from Schistosoma mansoni (Blood fluke).